We begin with the raw amino-acid sequence, 255 residues long: Cell division protein DivIB (255 aa).

Residues 1 to 30 (MKNSKVIKLQDRVPKLKNQKKRNKPPVNHR) lie on the Cytoplasmic side of the membrane. The helical transmembrane segment at 31-51 (LILYISILFLLVLFLIYFRSP) threads the bilayer. The Extracellular segment spans residues 52–255 (LSNIKKISVF…FKYLDDEKKK (204 aa)). A POTRA domain is found at 53 to 121 (SNIKKISVFG…NKIDIHIEEY (69 aa)).

It belongs to the FtsQ/DivIB family. DivIB subfamily.

The protein resides in the cell membrane. Cell division protein that may be involved in stabilizing or promoting the assembly of the division complex. This Bacillus cytotoxicus (strain DSM 22905 / CIP 110041 / 391-98 / NVH 391-98) protein is Cell division protein DivIB.